Consider the following 127-residue polypeptide: RutC family protein PYRAB12510 (127 aa).

Belongs to the RutC family.

The protein is RutC family protein PYRAB12510 of Pyrococcus abyssi (strain GE5 / Orsay).